A 228-amino-acid chain; its full sequence is Prophenin-2 (228 aa).

An N-terminal signal peptide occupies residues 1–29 (METQRASLCLGRWSLWLLLLALVVPSASA). Residues 30-146 (QALSYREAVL…FLRRPRLRRQ (117 aa)) constitute a propeptide that is removed on maturation. Disulfide bonds link Cys-85-Cys-96 and Cys-107-Cys-124. Repeat copies occupy residues 148 to 157 (FPPPNVPGPR), 158 to 167 (FPPPNVPGPR), 168 to 177 (FPPPNFPGPR), 178 to 187 (FPPPNFPGPR), 188 to 197 (FPPPNFPGPP), 198 to 207 (FPPPIFPGPW), and 208 to 217 (FPPPPPFRPP). The 7 X 10 AA tandem repeats stretch occupies residues 148 to 217 (FPPPNVPGPR…FPPPPPFRPP (70 aa)). 2 disordered regions span residues 167–195 (RFPP…NFPG) and 207–228 (WFPP…PGRR). The residue at position 225 (Pro-225) is a Proline amide. The propeptide at 226–228 (GRR) is removed in mature form.

Belongs to the cathelicidin family.

The protein resides in the secreted. Exerts antimicrobial activity. It is more effective against Gram-negative bacteria than Gram-positive bacteria. This is Prophenin-2 from Sus scrofa (Pig).